We begin with the raw amino-acid sequence, 214 residues long: Large ribosomal subunit protein uL16-like (214 aa).

The protein belongs to the universal ribosomal protein uL16 family. Component of the 60S large ribosomal subunit (LSU).

The protein resides in the cytoplasm. In terms of biological role, testis-specific component of the ribosome, which is required for the transition from prophase to metaphase in male meiosis I. Compensates for the inactivated X-linked RPL10 paralog during spermatogenesis. The ribosome is a large ribonucleoprotein complex responsible for the synthesis of proteins in the cell. The small ribosomal subunit (SSU) binds messenger RNAs (mRNAs) and translates the encoded message by selecting cognate aminoacyl-transfer RNA (tRNA) molecules. The large subunit (LSU) contains the ribosomal catalytic site termed the peptidyl transferase center (PTC), which catalyzes the formation of peptide bonds, thereby polymerizing the amino acids delivered by tRNAs into a polypeptide chain. The nascent polypeptides leave the ribosome through a tunnel in the LSU and interact with protein factors that function in enzymatic processing, targeting, and the membrane insertion of nascent chains at the exit of the ribosomal tunnel. This is Large ribosomal subunit protein uL16-like (RPL10L) from Macaca fascicularis (Crab-eating macaque).